The chain runs to 537 residues: ESX-2 secretion system protein EccE2 (537 aa).

Residues 31 to 51 (ALGGQLGAVMAVVVGVALVFV) form a helical membrane-spanning segment.

Belongs to the EccE family. In terms of assembly, could be part of the ESX-2 / type VII secretion system (T7SS), which is composed of cytosolic and membrane components.

The protein localises to the cell membrane. This chain is ESX-2 secretion system protein EccE2 (eccE2), found in Mycobacterium tuberculosis (strain CDC 1551 / Oshkosh).